Here is a 127-residue protein sequence, read N- to C-terminus: Small ribosomal subunit protein uS11 (127 aa).

Belongs to the universal ribosomal protein uS11 family. As to quaternary structure, part of the 30S ribosomal subunit. Interacts with proteins S7 and S18. Binds to IF-3.

Located on the platform of the 30S subunit, it bridges several disparate RNA helices of the 16S rRNA. Forms part of the Shine-Dalgarno cleft in the 70S ribosome. This is Small ribosomal subunit protein uS11 from Prosthecochloris aestuarii (strain DSM 271 / SK 413).